A 236-amino-acid polypeptide reads, in one-letter code: Chorionic somatomammotropin hormone 1 (236 aa).

A signal peptide spans 1 to 36; it reads MAPASSHRGHQWICDLVRGSCLLLLLVVSNLLLCQG. N-linked (GlcNAc...) asparagine glycosylation is present at asparagine 89. 2 disulfides stabilise this stretch: cysteine 98–cysteine 214 and cysteine 231–cysteine 236.

It belongs to the somatotropin/prolactin family.

It localises to the secreted. This is Chorionic somatomammotropin hormone 1 (CSH1) from Bos taurus (Bovine).